The following is a 704-amino-acid chain: Elongation factor G (704 aa).

Positions 8–290 constitute a tr-type G domain; sequence EKYRNIGICA…GVVRYLPAPN (283 aa). GTP-binding positions include 17–24, 88–92, and 142–145; these read AHVDAGKT, DTPGH, and NKMD.

This sequence belongs to the TRAFAC class translation factor GTPase superfamily. Classic translation factor GTPase family. EF-G/EF-2 subfamily.

The protein localises to the cytoplasm. In terms of biological role, catalyzes the GTP-dependent ribosomal translocation step during translation elongation. During this step, the ribosome changes from the pre-translocational (PRE) to the post-translocational (POST) state as the newly formed A-site-bound peptidyl-tRNA and P-site-bound deacylated tRNA move to the P and E sites, respectively. Catalyzes the coordinated movement of the two tRNA molecules, the mRNA and conformational changes in the ribosome. The protein is Elongation factor G of Francisella tularensis subsp. holarctica (strain FTNF002-00 / FTA).